A 452-amino-acid chain; its full sequence is Phosphatidylinositol N-acetylglucosaminyltransferase GPI3 subunit (452 aa).

Residues 407-427 (LYLLCGIVEYMLFFLLEWLYP) traverse the membrane as a helical segment.

The protein belongs to the glycosyltransferase group 1 family. As to quaternary structure, component of the phosphatidylinositol N-acetylglucosaminyltransferase complex composed of at least GPI1, GPI2, GPI3, GPI15, GPI19 and ERI1.

It localises to the endoplasmic reticulum membrane. The enzyme catalyses a 1,2-diacyl-sn-glycero-3-phospho-(1D-myo-inositol) + UDP-N-acetyl-alpha-D-glucosamine = a 6-(N-acetyl-alpha-D-glucosaminyl)-1-(1,2-diacyl-sn-glycero-3-phospho)-1D-myo-inositol + UDP + H(+). The protein operates within glycolipid biosynthesis; glycosylphosphatidylinositol-anchor biosynthesis. With respect to regulation, inhibited by Ras, probably via the interaction between RAS2 and ERI1. Its function is as follows. Catalytic subunit in the complex catalyzing the transfer of N-acetylglucosamine from UDP-N-acetylglucosamine to phosphatidylinositol, the first step of GPI biosynthesis. The chain is Phosphatidylinositol N-acetylglucosaminyltransferase GPI3 subunit (SPT14) from Saccharomyces cerevisiae (strain YJM789) (Baker's yeast).